A 245-amino-acid polypeptide reads, in one-letter code: 4-hydroxy-tetrahydrodipicolinate reductase (245 aa).

NAD(+) contacts are provided by residues 7–12 (GAKGKV), 75–77 (GTT), and 102–105 (APNF). H132 (proton donor/acceptor) is an active-site residue. H133 is a (S)-2,3,4,5-tetrahydrodipicolinate binding site. Catalysis depends on K136, which acts as the Proton donor. Residue 142–143 (GT) participates in (S)-2,3,4,5-tetrahydrodipicolinate binding.

This sequence belongs to the DapB family.

The protein resides in the cytoplasm. It catalyses the reaction (S)-2,3,4,5-tetrahydrodipicolinate + NAD(+) + H2O = (2S,4S)-4-hydroxy-2,3,4,5-tetrahydrodipicolinate + NADH + H(+). The enzyme catalyses (S)-2,3,4,5-tetrahydrodipicolinate + NADP(+) + H2O = (2S,4S)-4-hydroxy-2,3,4,5-tetrahydrodipicolinate + NADPH + H(+). Its pathway is amino-acid biosynthesis; L-lysine biosynthesis via DAP pathway; (S)-tetrahydrodipicolinate from L-aspartate: step 4/4. Its function is as follows. Catalyzes the conversion of 4-hydroxy-tetrahydrodipicolinate (HTPA) to tetrahydrodipicolinate. This chain is 4-hydroxy-tetrahydrodipicolinate reductase, found in Mycobacterium bovis (strain BCG / Pasteur 1173P2).